The sequence spans 216 residues: Small ribosomal subunit protein uS3 (216 aa).

The KH type-2 domain occupies 38–108 (LREFVKKKLH…DLAIDIQEVK (71 aa)).

The protein belongs to the universal ribosomal protein uS3 family. As to quaternary structure, part of the 30S ribosomal subunit. Forms a tight complex with proteins S10 and S14.

In terms of biological role, binds the lower part of the 30S subunit head. Binds mRNA in the 70S ribosome, positioning it for translation. In Desulfosudis oleivorans (strain DSM 6200 / JCM 39069 / Hxd3) (Desulfococcus oleovorans), this protein is Small ribosomal subunit protein uS3.